A 537-amino-acid polypeptide reads, in one-letter code: CTP synthase (537 aa).

An amidoligase domain region spans residues 1-265; that stretch reads MVHFIFVTGG…DNKVLKFFNI (265 aa). Serine 13 provides a ligand contact to CTP. UTP is bound at residue serine 13. ATP contacts are provided by residues 14-19 and aspartate 71; that span reads SLGKGL. Mg(2+)-binding residues include aspartate 71 and glutamate 139. Residues 146–148 and lysine 222 each bind CTP; that span reads DIE. Lysine 222 provides a ligand contact to UTP. Residues 290-536 enclose the Glutamine amidotransferase type-1 domain; sequence RIAIIAKYHK…IKAAIEYNKC (247 aa). Residue glycine 352 coordinates L-glutamine. The Nucleophile; for glutamine hydrolysis role is filled by cysteine 379. L-glutamine contacts are provided by residues 380–383, glutamate 403, and arginine 464; that span reads FGMQ. Catalysis depends on residues histidine 509 and glutamate 511.

It belongs to the CTP synthase family. Homotetramer.

The catalysed reaction is UTP + L-glutamine + ATP + H2O = CTP + L-glutamate + ADP + phosphate + 2 H(+). It carries out the reaction L-glutamine + H2O = L-glutamate + NH4(+). It catalyses the reaction UTP + NH4(+) + ATP = CTP + ADP + phosphate + 2 H(+). It participates in pyrimidine metabolism; CTP biosynthesis via de novo pathway; CTP from UDP: step 2/2. With respect to regulation, allosterically activated by GTP, when glutamine is the substrate; GTP has no effect on the reaction when ammonia is the substrate. The allosteric effector GTP functions by stabilizing the protein conformation that binds the tetrahedral intermediate(s) formed during glutamine hydrolysis. Inhibited by the product CTP, via allosteric rather than competitive inhibition. In terms of biological role, catalyzes the ATP-dependent amination of UTP to CTP with either L-glutamine or ammonia as the source of nitrogen. Regulates intracellular CTP levels through interactions with the four ribonucleotide triphosphates. The sequence is that of CTP synthase from Rickettsia peacockii (strain Rustic).